The primary structure comprises 368 residues: C-glycoside deglycosidase alpha subunit (368 aa).

Residue E145 participates in a divalent metal cation binding. The active-site Proton acceptor is H147. A divalent metal cation-binding residues include D177, H275, and E311.

The protein belongs to the C-glycoside deglycosidase alpha subunit family. Heterodimer composed of an alpha subunit (CarB) and a beta subunit (CarC). A divalent metal cation serves as cofactor.

It carries out the reaction 3''-dehydroisovitexin = 1,5-anhydro-D-erythro-hex-1-en-3-ulose + apigenin. It catalyses the reaction 3''-dehydroisoorientin = 1,5-anhydro-D-erythro-hex-1-en-3-ulose + luteolin. In terms of biological role, carbon-carbon bond-cleaving enzyme which participates in the metabolism of C-glycosides. Acts on the C6-glycosylated compounds 3''-dehydroisovitexin (3''-oxo-isovitexin) and 3''-dehydroisoorientin (3''-oxo-homoorientin). Shows weak activity with 3'-dehydromangiferin (3'-oxo-mangiferin). The sequence is that of C-glycoside deglycosidase alpha subunit from Microbacterium trichothecenolyticum (Aureobacterium trichothecenolyticum).